The following is a 129-amino-acid chain: Large ribosomal subunit protein bL19 (129 aa).

The protein belongs to the bacterial ribosomal protein bL19 family.

This protein is located at the 30S-50S ribosomal subunit interface and may play a role in the structure and function of the aminoacyl-tRNA binding site. The sequence is that of Large ribosomal subunit protein bL19 from Granulibacter bethesdensis (strain ATCC BAA-1260 / CGDNIH1).